A 182-amino-acid chain; its full sequence is PTS system glucitol/sorbitol-specific EIIC component (182 aa).

Residues Met1–Asn182 form the PTS EIIC type-5 domain. A run of 3 helical transmembrane segments spans residues Gly28–Gly48, Val63–Ala83, and Thr139–Val159.

The protein resides in the cell membrane. Functionally, the phosphoenolpyruvate-dependent sugar phosphotransferase system (PTS), a major carbohydrate active transport system, catalyzes the phosphorylation of incoming sugar substrates concomitant with their translocation across the cell membrane. The enzyme II complex composed of SrlA, SrlB and SrlE is involved in glucitol/sorbitol transport. This Clostridium beijerinckii (strain ATCC 51743 / NCIMB 8052) (Clostridium acetobutylicum) protein is PTS system glucitol/sorbitol-specific EIIC component (srlA).